The chain runs to 501 residues: Cytochrome P450 71D6 (501 aa).

Cys-442 serves as a coordination point for heme.

This sequence belongs to the cytochrome P450 family. The cofactor is heme.

In Solanum chacoense (Chaco potato), this protein is Cytochrome P450 71D6 (CYP71D6).